The sequence spans 159 residues: MKKMHGFTLIELMIVVAIIGVLASTALMQYQNFVVRSQVTRVLMEAGELRLAVEQCLNDGTTKIGNGQNECDPRASGSNIISGASQNPEIVIAANTGVVQFPNPLTEETALTATFNNSAASIIHGKKLIWQRQKSGSWYCHSNAAEKFLPSGCKYDASL.

The propeptide at 1 to 6 (MKKMHG) is leader sequence. Phe7 carries the N-methylphenylalanine modification. Residues 7-27 (FTLIELMIVVAIIGVLASTAL) traverse the membrane as a helical segment. 2 disulfide bridges follow: Cys56/Cys71 and Cys140/Cys153.

It belongs to the N-Me-Phe pilin family. In terms of assembly, the pili are polar flexible filaments of about 5.4 nanometers diameter and 2.5 micrometers average length; they consist of only a single polypeptide chain arranged in a helical configuration of five subunits per turn in the assembled pilus.

Its subcellular location is the fimbrium. The protein localises to the membrane. This chain is Probable minor fimbrial protein (fimZ), found in Dichelobacter nodosus (Bacteroides nodosus).